The sequence spans 638 residues: Chaperone protein DnaK (638 aa).

At Thr-198 the chain carries Phosphothreonine; by autocatalysis. The segment covering 603–618 (QQAQAQQAQGADADAQ) has biased composition (low complexity). Residues 603–638 (QQAQAQQAQGADADAQQSKEDDVVDAEFEEVKDDKK) form a disordered region. Residues 624-638 (DVVDAEFEEVKDDKK) are compositionally biased toward acidic residues.

The protein belongs to the heat shock protein 70 family.

Acts as a chaperone. The polypeptide is Chaperone protein DnaK (Vibrio campbellii (strain ATCC BAA-1116)).